We begin with the raw amino-acid sequence, 403 residues long: Phosphoglycerate kinase (403 aa).

Residues 22–24 (DLN), R37, 60–63 (HLGN), R119, and R152 contribute to the substrate site. ATP contacts are provided by residues K202, E325, and 355 to 358 (GGDT).

It belongs to the phosphoglycerate kinase family. In terms of assembly, monomer.

It localises to the cytoplasm. It carries out the reaction (2R)-3-phosphoglycerate + ATP = (2R)-3-phospho-glyceroyl phosphate + ADP. The protein operates within carbohydrate degradation; glycolysis; pyruvate from D-glyceraldehyde 3-phosphate: step 2/5. The sequence is that of Phosphoglycerate kinase from Orientia tsutsugamushi (strain Boryong) (Rickettsia tsutsugamushi).